The sequence spans 245 residues: Biosynthetic peptidoglycan transglycosylase (245 aa).

A helical transmembrane segment spans residues 29 to 49; the sequence is LLVAFLILSLVLVATVSVINP.

The protein belongs to the glycosyltransferase 51 family.

The protein resides in the cell inner membrane. It catalyses the reaction [GlcNAc-(1-&gt;4)-Mur2Ac(oyl-L-Ala-gamma-D-Glu-L-Lys-D-Ala-D-Ala)](n)-di-trans,octa-cis-undecaprenyl diphosphate + beta-D-GlcNAc-(1-&gt;4)-Mur2Ac(oyl-L-Ala-gamma-D-Glu-L-Lys-D-Ala-D-Ala)-di-trans,octa-cis-undecaprenyl diphosphate = [GlcNAc-(1-&gt;4)-Mur2Ac(oyl-L-Ala-gamma-D-Glu-L-Lys-D-Ala-D-Ala)](n+1)-di-trans,octa-cis-undecaprenyl diphosphate + di-trans,octa-cis-undecaprenyl diphosphate + H(+). Its pathway is cell wall biogenesis; peptidoglycan biosynthesis. Its function is as follows. Peptidoglycan polymerase that catalyzes glycan chain elongation from lipid-linked precursors. This is Biosynthetic peptidoglycan transglycosylase from Shewanella amazonensis (strain ATCC BAA-1098 / SB2B).